Consider the following 352-residue polypeptide: Endophilin-A1 (352 aa).

Residues 1 to 21 (MSVAGLKKQFHKATQKVSEKV) form a membrane-binding amphipathic helix region. The disordered stretch occupies residues 1-27 (MSVAGLKKQFHKATQKVSEKVGGAEGT). The interval 1 to 125 (MSVAGLKKQF…EVGEAMRELS (125 aa)) is binds and tubulates liposomes. The 232-residue stretch at 18-249 (SEKVGGAEGT…LEERIRQASS (232 aa)) folds into the BAR domain. A required for dimerization upon membrane association region spans residues 60–87 (PNPASRAKLSMINTMSKIRGQEKGPGYP). A coiled-coil region spans residues 181–248 (EELRQALEKF…RLEERIRQAS (68 aa)). A Phosphoserine modification is found at Ser-262. The disordered stretch occupies residues 264 to 289 (EFATGDSTQPNGGLSHTGTPKPPGVQ). Polar residues predominate over residues 268–281 (GDSTQPNGGLSHTG). Residues 290-349 (MDQPCCRALYDFEPENEGELGFKEGDIITLTNQIDENWYEGMLHGQSGFFPINYVEILVA) form the SH3 domain. Tyr-299 is subject to Phosphotyrosine.

Belongs to the endophilin family. In terms of assembly, monomer; in cytoplasm. Homodimer; when associated with membranes. Interacts with SYNJ1. Interacts with DNM1. Interacts with MAP4K3; the interaction appears to regulate MAP4K3-mediated JNK activation. Interacts with OPHN1. Interacts with PDCD6IP. Interacts with BIN2. Interacts with ATXN2. Interacts with ADAM9 and ADAM15 cytoplasmic tails. Interacts with TMEM108. Interacts with ADGRB2.

The protein resides in the cytoplasm. The protein localises to the membrane. It localises to the early endosome. It is found in the presynapse. Implicated in synaptic vesicle endocytosis. May recruit other proteins to membranes with high curvature. Required for BDNF-dependent dendrite outgrowth. Cooperates with SH3GL2 to mediate BDNF-NTRK2 early endocytic trafficking and signaling from early endosomes. The polypeptide is Endophilin-A1 (Sh3gl2) (Mus musculus (Mouse)).